The sequence spans 199 residues: DnaJ homolog subfamily C member 5B (199 aa).

Residues Ser-14 and Ser-16 each carry the phosphoserine modification. Residues Ala-19–Gly-84 form the J domain.

In terms of assembly, interacts with the chaperone complex consisting of HSC70 and SGTA. In terms of processing, palmitoylated.

It is found in the membrane. This is DnaJ homolog subfamily C member 5B (DNAJC5B) from Ailuropoda melanoleuca (Giant panda).